A 298-amino-acid polypeptide reads, in one-letter code: MSETSPHRSGSVAVIGRPNVGKSTLTNALVGAKVSIVSNRPQTTRHRLLGIATFPEGQLMLVDTPGLHREQKRAMNRVMNRAARGSLEGVDAAVLVIEAGRWDEEDTLAFRVLSDADVPVVLVVNKVDRLKDKTALFPFLAQVSEGRTFAAVHPVSALKRKGLEALVSDLLKLVPEAEAMYGEDEITDRSQRFLAGELVREQLMRQLGEELPYATTVEIERFAEDGALLRIGAVIWVEREGQKAIVIGKGGTRLKDIGGKARLQMERLFGAKVFLETWVRVREGWSDDEAALKAFGYD.

The Era-type G domain maps to 8–176 (RSGSVAVIGR…VSDLLKLVPE (169 aa)). The interval 16-23 (GRPNVGKS) is G1. Position 16–23 (16–23 (GRPNVGKS)) interacts with GTP. The G2 stretch occupies residues 42-46 (QTTRH). The G3 stretch occupies residues 63 to 66 (DTPG). Residues 63 to 67 (DTPGL) and 125 to 128 (NKVD) each bind GTP. The interval 125-128 (NKVD) is G4. Residues 155-157 (VSA) are G5. Residues 199-283 (VREQLMRQLG…FLETWVRVRE (85 aa)) form the KH type-2 domain.

It belongs to the TRAFAC class TrmE-Era-EngA-EngB-Septin-like GTPase superfamily. Era GTPase family. In terms of assembly, monomer.

Its subcellular location is the cytoplasm. The protein localises to the cell inner membrane. Functionally, an essential GTPase that binds both GDP and GTP, with rapid nucleotide exchange. Plays a role in 16S rRNA processing and 30S ribosomal subunit biogenesis and possibly also in cell cycle regulation and energy metabolism. This Xanthomonas campestris pv. campestris (strain 8004) protein is GTPase Era.